A 96-amino-acid chain; its full sequence is MAFNVITFLQFSVFVVILFNINLHSASAGSKGSSASQSSDNSVVAKFCDTNCTINEGGKWTECKGGCFCVHVGNETVGRCMKLDGDYDYPSPKPEE.

The signal sequence occupies residues 1 to 28 (MAFNVITFLQFSVFVVILFNINLHSASA). 3 disulfide bridges follow: cysteine 48-cysteine 67, cysteine 52-cysteine 69, and cysteine 63-cysteine 80. A glycan (N-linked (GlcNAc...) asparagine) is linked at asparagine 51. Asparagine 74 carries an N-linked (GlcNAc...) asparagine glycan.

It is found in the secreted. Salivary chemokine-binding protein which binds to host chemokines CXCL1, CXCL2, CXCL3, CXCL5, CXCL6, CXCL10, CXCL11 and CXCL13. In Ixodes ricinus (Common tick), this protein is Evasin P1100.